A 294-amino-acid chain; its full sequence is Metallophosphoesterase MPPED2 (294 aa).

Mn(2+) contacts are provided by D65, H67, D86, N117, and H213. 117–118 (NH) serves as a coordination point for GMP. Residues 225 to 226 (KE) and 252 to 255 (GIHE) each bind GMP. H254 contributes to the Mn(2+) binding site.

It belongs to the UPF0046 family. In terms of assembly, homodimer. Requires Mn(2+) as cofactor. Co(2+) is required as a cofactor. In terms of tissue distribution, expressed predominantly in fetal brain.

With respect to regulation, inhibited by nmolar levels of AMP and GMP. Displays low metallophosphoesterase activity (in vitro). May play a role in the development of the nervous system. The sequence is that of Metallophosphoesterase MPPED2 (MPPED2) from Homo sapiens (Human).